A 241-amino-acid chain; its full sequence is N-acetylmuramoyl-L-alanine amidase Rv3717 (241 aa).

Positions Met-1–Ile-24 are cleaved as a signal peptide. The MurNAc-LAA domain occupies Val-29 to Val-230. His-35 contacts Zn(2+). Residues Arg-45–Pro-69 are disordered. Positions Lys-55–Gly-67 are enriched in polar residues. The cysteines at positions 57 and 105 are disulfide-linked. Residues Glu-70 and His-125 each contribute to the Zn(2+) site. The Proton donor/acceptor role is filled by Glu-200.

This sequence belongs to the N-acetylmuramoyl-L-alanine amidase 3 family. As to quaternary structure, monomer. Zn(2+) is required as a cofactor.

Its subcellular location is the periplasm. The catalysed reaction is Hydrolyzes the link between N-acetylmuramoyl residues and L-amino acid residues in certain cell-wall glycopeptides.. The protein operates within cell wall degradation; peptidoglycan degradation. The structure reveals a short flexible hairpin turn that partially occludes the active site and may be involved in autoregulation. Cell-wall hydrolase that hydrolyzes the amide bond between N-acetylmuramic acid and L-alanine in cell-wall glycopeptides. Is able to hydrolyze the cell walls of several bacterial species (i.e. Paenibacillus sp., B.avium, E.coli DH5alpha, E.aerogenes, L.acidophilus, B.thuringiensis, B.pumilus, B.subtilis and E.coli W3110), thereby showing that it is a cell-wall hydrolase with broad-spectrum activity. May have a role in peptidoglycan fragment recycling. This chain is N-acetylmuramoyl-L-alanine amidase Rv3717, found in Mycobacterium tuberculosis (strain ATCC 25618 / H37Rv).